We begin with the raw amino-acid sequence, 174 residues long: Probable carboxylesterase Culp5 (174 aa).

The active-site Nucleophile is S67. C137 and C144 form a disulfide bridge. D141 is a catalytic residue. H153 functions as the Proton donor/acceptor in the catalytic mechanism.

Belongs to the cutinase family.

Does not exhibit cutinase activity. The sequence is that of Probable carboxylesterase Culp5 from Mycobacterium tuberculosis (strain ATCC 25618 / H37Rv).